The sequence spans 136 residues: Keratin-associated protein 4-2 (136 aa).

Repeat copies occupy residues 5 to 9, 20 to 24, 25 to 29, 30 to 34, 35 to 39, 40 to 44, 45 to 49, 50 to 54, 55 to 59, 60 to 64, 65 to 69, 70 to 74, 75 to 79, 80 to 84, 90 to 94, 95 to 99, 100 to 104, 110 to 114, 120 to 124, and 125 to 129. Residues 5–129 form a 20 X 5 AA repeats OF C-C-[GRQVS]-[SPT]-[VSTQ] region; sequence CCGSVCSDQG…CCVSTCCRPT (125 aa).

This sequence belongs to the KRTAP type 4 family. As to quaternary structure, interacts with hair keratins.

In the hair cortex, hair keratin intermediate filaments are embedded in an interfilamentous matrix, consisting of hair keratin-associated proteins (KRTAP), which are essential for the formation of a rigid and resistant hair shaft through their extensive disulfide bond cross-linking with abundant cysteine residues of hair keratins. The matrix proteins include the high-sulfur and high-glycine-tyrosine keratins. The polypeptide is Keratin-associated protein 4-2 (KRTAP4-2) (Homo sapiens (Human)).